The following is a 181-amino-acid chain: Ribulose bisphosphate carboxylase small subunit, chloroplastic (181 aa).

The N-terminal 56 residues, 1 to 56, are a transit peptide targeting the chloroplast; the sequence is MASISSSAIATVNRTTSTQASLAAPFTGLKSNVAFPVTKKANNDFSSLPSNGGRVQ.

It belongs to the RuBisCO small chain family. Heterohexadecamer of 8 large and 8 small subunits.

It is found in the plastid. Its subcellular location is the chloroplast. In terms of biological role, ruBisCO catalyzes two reactions: the carboxylation of D-ribulose 1,5-bisphosphate, the primary event in carbon dioxide fixation, as well as the oxidative fragmentation of the pentose substrate. Both reactions occur simultaneously and in competition at the same active site. Although the small subunit is not catalytic it is essential for maximal activity. In Lactuca sativa (Garden lettuce), this protein is Ribulose bisphosphate carboxylase small subunit, chloroplastic.